Consider the following 527-residue polypeptide: Plant-specific TFIIB-related protein PTF2 (527 aa).

The TFIIB-type zinc finger occupies 1–30 (MRCKRCNGSNFERDEDTGNSYCGGCGTLRE).

Can form homodimer. Interacts with TBP2. In terms of tissue distribution, expressed in shoot apical meristems, root tips, primordia of lateral roots, inflorescences, developing pollen grains and embryos.

The protein resides in the nucleus. Functionally, plant-specific TFIIB-related protein that plays important roles in pollen germination and embryogenesis, possibly by regulating gene expression through interaction with TBP2 and the subunits of RNA polymerases. Binds double-stranded DNA in vitro. The protein is Plant-specific TFIIB-related protein PTF2 of Arabidopsis thaliana (Mouse-ear cress).